The chain runs to 941 residues: Probable lipoxygenase 8, chloroplastic (941 aa).

2 disordered regions span residues 1-22 and 45-68; these read MLRPQLNPSSSHHHTTTTSSSS and LIAGAGCRTTRRRQQGRQRVVVRC. The transit peptide at 1 to 67 directs the protein to the chloroplast; it reads MLRPQLNPSS…QQGRQRVVVR (67 aa). Residues 100–236 form the PLAT domain; sequence AVATIKVTVE…SIDEGTPGKR (137 aa). One can recognise a Lipoxygenase domain in the interval 242 to 941; it reads AYLPGQTPAG…GMGIPNSTSI (700 aa). 2 disordered regions span residues 255 to 274 and 288 to 331; these read YREEDLKQKRGNGAGQREAD and NPDS…RKGN. Residues 319 to 331 show a composition bias toward basic and acidic residues; that stretch reads SKKDPKSETRKGN. Fe cation contacts are provided by His598, His603, His790, Asn794, and Ile941.

The protein belongs to the lipoxygenase family. It depends on Fe cation as a cofactor.

It is found in the plastid. Its subcellular location is the chloroplast. The enzyme catalyses (9Z,12Z)-octadecadienoate + O2 = (13S)-hydroperoxy-(9Z,11E)-octadecadienoate. The catalysed reaction is (9Z,12Z,15Z)-octadecatrienoate + O2 = (13S)-hydroperoxy-(9Z,11E,15Z)-octadecatrienoate. It participates in lipid metabolism; oxylipin biosynthesis. In terms of biological role, plant lipoxygenase may be involved in a number of diverse aspects of plant physiology including growth and development, pest resistance, and senescence or responses to wounding. It catalyzes the hydroperoxidation of lipids containing a cis,cis-1,4-pentadiene structure. The polypeptide is Probable lipoxygenase 8, chloroplastic (CM-LOX2) (Oryza sativa subsp. japonica (Rice)).